A 98-amino-acid chain; its full sequence is Integration host factor subunit beta (98 aa).

The protein belongs to the bacterial histone-like protein family. Heterodimer of an alpha and a beta chain.

Functionally, this protein is one of the two subunits of integration host factor, a specific DNA-binding protein that functions in genetic recombination as well as in transcriptional and translational control. The polypeptide is Integration host factor subunit beta (Teredinibacter turnerae (strain ATCC 39867 / T7901)).